Reading from the N-terminus, the 117-residue chain is Immunoglobulin heavy variable 1-46 (117 aa).

The signal sequence occupies residues 1 to 19; the sequence is MDWTWRVFCLLAVAPGAHS. A framework-1 region spans residues 20-44; it reads QVQLVQSGAEVKKPGASVKVSCKAS. An Ig-like domain is found at 20–117; it reads QVQLVQSGAE…EDTAVYYCAR (98 aa). A disulfide bridge links C41 with C115. Residues 45–52 are complementarity-determining-1; it reads GYTFTSYY. Residues 53–69 form a framework-2 region; the sequence is MHWVRQAPGQGLEWMGI. A complementarity-determining-2 region spans residues 70 to 77; it reads INPSGGST. The tract at residues 78–115 is framework-3; sequence SYAQKFQGRVTMTRDTSTSTVYMELSSLRSEDTAVYYC. The tract at residues 116-117 is complementarity-determining-3; it reads AR.

As to quaternary structure, immunoglobulins are composed of two identical heavy chains and two identical light chains; disulfide-linked.

It localises to the secreted. The protein resides in the cell membrane. In terms of biological role, v region of the variable domain of immunoglobulin heavy chains that participates in the antigen recognition. Immunoglobulins, also known as antibodies, are membrane-bound or secreted glycoproteins produced by B lymphocytes. In the recognition phase of humoral immunity, the membrane-bound immunoglobulins serve as receptors which, upon binding of a specific antigen, trigger the clonal expansion and differentiation of B lymphocytes into immunoglobulins-secreting plasma cells. Secreted immunoglobulins mediate the effector phase of humoral immunity, which results in the elimination of bound antigens. The antigen binding site is formed by the variable domain of one heavy chain, together with that of its associated light chain. Thus, each immunoglobulin has two antigen binding sites with remarkable affinity for a particular antigen. The variable domains are assembled by a process called V-(D)-J rearrangement and can then be subjected to somatic hypermutations which, after exposure to antigen and selection, allow affinity maturation for a particular antigen. The chain is Immunoglobulin heavy variable 1-46 from Homo sapiens (Human).